The following is a 327-amino-acid chain: Ubiquinone biosynthesis protein COQ4, mitochondrial (327 aa).

Zn(2+)-binding residues include His-208, Asp-209, His-212, and Glu-224.

The protein belongs to the COQ4 family. Component of a multi-subunit COQ enzyme complex, composed of at least COQ3, COQ4, COQ5, COQ6, COQ7 and COQ9. Zn(2+) is required as a cofactor.

It is found in the mitochondrion inner membrane. It catalyses the reaction a 4-hydroxy-3-methoxy-5-(all-trans-polyprenyl)benzoate + H(+) = a 2-methoxy-6-(all-trans-polyprenyl)phenol + CO2. It participates in cofactor biosynthesis; ubiquinone biosynthesis. Its function is as follows. Lyase that catalyzes the C1-decarboxylation of 4-hydroxy-3-methoxy-5-(all-trans-polyprenyl)benzoic acid into 2-methoxy-6-(all-trans-polyprenyl)phenol during ubiquinone biosynthesis. The sequence is that of Ubiquinone biosynthesis protein COQ4, mitochondrial from Lachancea thermotolerans (strain ATCC 56472 / CBS 6340 / NRRL Y-8284) (Yeast).